Reading from the N-terminus, the 183-residue chain is Oligoribonuclease (183 aa).

The Exonuclease domain occupies 8–171 (LIWLDMEMTG…ADIRESIAEL (164 aa)). The active site involves Tyr129.

It belongs to the oligoribonuclease family.

It localises to the cytoplasm. In terms of biological role, 3'-to-5' exoribonuclease specific for small oligoribonucleotides. In Aromatoleum aromaticum (strain DSM 19018 / LMG 30748 / EbN1) (Azoarcus sp. (strain EbN1)), this protein is Oligoribonuclease.